A 186-amino-acid polypeptide reads, in one-letter code: Ribosome-recycling factor (186 aa).

The protein belongs to the RRF family.

It localises to the cytoplasm. Responsible for the release of ribosomes from messenger RNA at the termination of protein biosynthesis. May increase the efficiency of translation by recycling ribosomes from one round of translation to another. This chain is Ribosome-recycling factor, found in Bordetella petrii (strain ATCC BAA-461 / DSM 12804 / CCUG 43448).